A 175-amino-acid chain; its full sequence is Large ribosomal subunit protein uL10 (175 aa).

This sequence belongs to the universal ribosomal protein uL10 family. As to quaternary structure, part of the ribosomal stalk of the 50S ribosomal subunit. The N-terminus interacts with L11 and the large rRNA to form the base of the stalk. The C-terminus forms an elongated spine to which L12 dimers bind in a sequential fashion forming a multimeric L10(L12)X complex.

Its function is as follows. Forms part of the ribosomal stalk, playing a central role in the interaction of the ribosome with GTP-bound translation factors. This Psychrobacter cryohalolentis (strain ATCC BAA-1226 / DSM 17306 / VKM B-2378 / K5) protein is Large ribosomal subunit protein uL10.